A 383-amino-acid polypeptide reads, in one-letter code: Mannan endo-1,4-beta-mannosidase A (383 aa).

A signal peptide spans 1–18 (MKFSQALLSLASLALAAA). Asn75 carries N-linked (GlcNAc...) asparagine glycosylation. Residue Trp97 coordinates substrate. A glycan (N-linked (GlcNAc...) asparagine) is linked at Asn199. Residues Asn210 and 211–213 (EPR) each bind substrate. Glu211 acts as the Proton donor/acceptor in catalysis. Cys214 and Cys217 form a disulfide bridge. Substrate-binding residues include Tyr279 and Trp283. An intrachain disulfide couples Cys301 to Cys308. The active-site Nucleophile is Glu312. A disulfide bond links Cys320 and Cys369. Asn332 carries an N-linked (GlcNAc...) asparagine glycan. Trp342 is a binding site for substrate.

This sequence belongs to the glycosyl hydrolase 5 (cellulase A) family. As to quaternary structure, monomer.

The protein resides in the secreted. It catalyses the reaction Random hydrolysis of (1-&gt;4)-beta-D-mannosidic linkages in mannans, galactomannans and glucomannans.. Its function is as follows. Endo-1,4-mannanase that catalyzes the random hydrolysis of (1-&gt;4)-beta-D-mannosidic linkages in mannans and heteromannans. It is a crucial enzyme for depolymerization of seed galactomannans and wood galactoglucomannans. Active against locust bean gum and gum guar. Also has transglycosylation activity. This Emericella nidulans (strain FGSC A4 / ATCC 38163 / CBS 112.46 / NRRL 194 / M139) (Aspergillus nidulans) protein is Mannan endo-1,4-beta-mannosidase A (manA).